A 141-amino-acid polypeptide reads, in one-letter code: Lutropin subunit beta (141 aa).

The first 20 residues, 1 to 20 (MEMLQGLLLWLLLSVAGVWA), serve as a signal peptide directing secretion. Serine 21 carries the blocked amino end (Ser) modification. 6 cysteine pairs are disulfide-bonded: cysteine 29/cysteine 77, cysteine 43/cysteine 92, cysteine 46/cysteine 130, cysteine 54/cysteine 108, cysteine 58/cysteine 110, and cysteine 113/cysteine 120. An N-linked (GlcNAc...) asparagine glycan is attached at asparagine 33.

This sequence belongs to the glycoprotein hormones subunit beta family. Heterodimer of a common alpha chain and a unique beta chain which confers biological specificity to thyrotropin, lutropin, follitropin and gonadotropin.

It is found in the secreted. Functionally, promotes spermatogenesis and ovulation by stimulating the testes and ovaries to synthesize steroids. This Sus scrofa (Pig) protein is Lutropin subunit beta (LHB).